The chain runs to 921 residues: Levanase (921 aa).

Residues 1-23 form the signal peptide; it reads MMKWFAKLILSLSLAVVMAASSA. Residues 409–412, Gln-428, 460–461, 539–540, Glu-591, and Trp-679 contribute to the substrate site; these read SASD, WS, and RD. The active site involves Asp-412.

This sequence belongs to the glycosyl hydrolase 32 family.

Its subcellular location is the secreted. It catalyses the reaction Random hydrolysis of (2-&gt;6)-beta-D-fructofuranosidic linkages in (2-&gt;6)-beta-D-fructans (levans) containing more than 3 fructose units.. Its activity is regulated as follows. Is completely inhibited by low concentrations of heavy metal ions, while Ca(2+) and Mg(2+) or chelating agents such as EDTA neither inhibit nor activate the enzyme to any significant extent. Functionally, catalyzes the hydrolysis of levan with endo-type specificity. The products of levan hydrolysis are a mixture of fructose and a series of fructooligosaccharides up to 12-mer, with levantriose being the major oligosaccharide obtained. Is not active towards sucrose. The polypeptide is Levanase (Bacillus sp. (strain L7)).